The sequence spans 471 residues: Methylenetetrahydrofolate--tRNA-(uracil-5-)-methyltransferase TrmFO (471 aa).

9 to 14 (GGGLSG) contacts FAD.

Belongs to the MnmG family. TrmFO subfamily. FAD serves as cofactor.

The protein localises to the cytoplasm. The catalysed reaction is uridine(54) in tRNA + (6R)-5,10-methylene-5,6,7,8-tetrahydrofolate + NADH + H(+) = 5-methyluridine(54) in tRNA + (6S)-5,6,7,8-tetrahydrofolate + NAD(+). It carries out the reaction uridine(54) in tRNA + (6R)-5,10-methylene-5,6,7,8-tetrahydrofolate + NADPH + H(+) = 5-methyluridine(54) in tRNA + (6S)-5,6,7,8-tetrahydrofolate + NADP(+). Functionally, catalyzes the folate-dependent formation of 5-methyl-uridine at position 54 (M-5-U54) in all tRNAs. The sequence is that of Methylenetetrahydrofolate--tRNA-(uracil-5-)-methyltransferase TrmFO from Beijerinckia indica subsp. indica (strain ATCC 9039 / DSM 1715 / NCIMB 8712).